The chain runs to 56 residues: Large ribosomal subunit protein bL32 (56 aa).

The tract at residues 1–26 (MAVQKSKVTRSRRGQRRSHDALTAAA) is disordered. A compositionally biased stretch (basic residues) spans 7–16 (KVTRSRRGQR).

The protein belongs to the bacterial ribosomal protein bL32 family.

This chain is Large ribosomal subunit protein bL32 (rpmF), found in Moritella marina (Vibrio marinus).